A 602-amino-acid chain; its full sequence is Exopolysaccharide phosphotransferase SCO2594 (602 aa).

The tract at residues 251–271 (PRAGEDLDAGDGAAGGPRPGL) is disordered.

The protein belongs to the stealth family.

The protein is Exopolysaccharide phosphotransferase SCO2594 of Streptomyces coelicolor (strain ATCC BAA-471 / A3(2) / M145).